The sequence spans 541 residues: Putative asparagine synthetase [glutamine-hydrolyzing] 1 (541 aa).

Cys2 serves as the catalytic For GATase activity. The 212-residue stretch at 2-213 (CSISGIIVKD…PNSQLIYYLD (212 aa)) folds into the Glutamine amidotransferase type-2 domain. L-glutamine-binding positions include 68–72 (RLAIV), 92–94 (NGE), and Asp116. ATP is bound by residues Val289 and 363-364 (SG).

It belongs to the asparagine synthetase family.

It catalyses the reaction L-aspartate + L-glutamine + ATP + H2O = L-asparagine + L-glutamate + AMP + diphosphate + H(+). It functions in the pathway amino-acid biosynthesis; L-asparagine biosynthesis; L-asparagine from L-aspartate (L-Gln route): step 1/1. The chain is Putative asparagine synthetase [glutamine-hydrolyzing] 1 from Methanocaldococcus jannaschii (strain ATCC 43067 / DSM 2661 / JAL-1 / JCM 10045 / NBRC 100440) (Methanococcus jannaschii).